We begin with the raw amino-acid sequence, 357 residues long: Tribbles homolog 3 (357 aa).

A disordered region spans residues 1-63 (MRASPLAVPA…PAPVHAPDVT (63 aa)). The interaction with DDIT3/CHOP stretch occupies residues 1 to 127 (MRASPLAVPA…GHVARPAEVL (127 aa)). One can recognise a Protein kinase domain in the interval 68-316 (LGPYVLLEPE…SGILLHPWLR (249 aa)). A disordered region spans residues 333–357 (DQVVPEGPGLEEAEEEGERDMGLYG). The span at 341–350 (GLEEAEEEGE) shows a compositional bias: acidic residues.

This sequence belongs to the protein kinase superfamily. CAMK Ser/Thr protein kinase family. Tribbles subfamily. Interacts with AKT1, AKT2, MAP2K1 and MAP2K7. Interacts with ATF4. Interacts with DDIT3/CHOP and inhibits its interaction with EP300/P300. Interacts with APOBEC3C. Interacts (via N-terminus) with APOBEC3A. Interacts with RELA.

Its subcellular location is the nucleus. Functionally, inactive protein kinase which acts as a regulator of the integrated stress response (ISR), a process for adaptation to various stress. Inhibits the transcriptional activity of DDIT3/CHOP and is involved in DDIT3/CHOP-dependent cell death during ER stress. May play a role in programmed neuronal cell death but does not appear to affect non-neuronal cells. Acts as a negative feedback regulator of the ATF4-dependent transcription during the ISR: while TRIB3 expression is promoted by ATF4, TRIB3 protein interacts with ATF4 and inhibits ATF4 transcription activity. Disrupts insulin signaling by binding directly to Akt kinases and blocking their activation. May bind directly to and mask the 'Thr-308' phosphorylation site in AKT1. Interacts with the NF-kappa-B transactivator p65 RELA and inhibits its phosphorylation and thus its transcriptional activation activity. Interacts with MAPK kinases and regulates activation of MAP kinases. Can inhibit APOBEC3A editing of nuclear DNA. The sequence is that of Tribbles homolog 3 (TRIB3) from Bos taurus (Bovine).